We begin with the raw amino-acid sequence, 383 residues long: Aurachin C monooxygenase/isomerase (383 aa).

Residues glycine 15, serine 47, valine 128, aspartate 285, and 295–299 (GQGGC) each bind FAD.

It depends on FAD as a cofactor.

It carries out the reaction aurachin C + NADH + O2 + H(+) = 4-hydroxy-2-methyl-3-oxo-4-[(2E,6E)-farnesyl]-3,4-dihydroquinoline 1-oxide + NAD(+) + H2O. The enzyme catalyses aurachin C + NADPH + O2 + H(+) = 4-hydroxy-2-methyl-3-oxo-4-[(2E,6E)-farnesyl]-3,4-dihydroquinoline 1-oxide + NADP(+) + H2O. The catalysed reaction is aurachin C + NADH + O2 + H(+) = aurachin C epoxide + NAD(+) + H2O. It catalyses the reaction aurachin C + NADPH + O2 + H(+) = aurachin C epoxide + NADP(+) + H2O. It carries out the reaction aurachin C epoxide = 2-hydroxy-1a-methyl-7a-[(2E,6E)-farnesyl]-1a,2-dihydrooxireno[2,3-b]quinolin-7(7aH)-one. The enzyme catalyses 2-hydroxy-1a-methyl-7a-[(2E,6E)-farnesyl]-1a,2-dihydrooxireno[2,3-b]quinolin-7(7aH)-one = 4-hydroxy-2-methyl-3-oxo-4-[(2E,6E)-farnesyl]-3,4-dihydroquinoline 1-oxide. Functionally, catalyzes the initial step in the conversion of aurachin C to aurachin B. Catalyzes the epoxidation of the C(2)-C(3) double bond of aurachin C, which is followed by a semipinacol rearrangement, causing migration of the farnesyl group from C(3) to C(4). Accepts both NADH and NADPH, but has a preference for NADH. This is Aurachin C monooxygenase/isomerase from Stigmatella aurantiaca.